The sequence spans 628 residues: MLLTTINDPQDLKKCTQPQLHTLASEIRQFLIETLSKTGGHLAPNLGVVELTLALHYVFDSPKDKLIWDVGHQAYVHKMLTGRREMFPTLRQYKGLCGFPKMVESPHDVWETGHSSTSLSAAMGMATARDLKKEKNHVVAVIGDGALTGGMALEALNHIGHERKNVIVVLNDNEMSIAPNVGALHNYLGKIRSTENYQWAKDEVEGLLKSIPAVGGKLAHMAERFKDSMKYLLVSGVLFEELGFTYIGPIDGHNMELLLDTLKTAKHTKGPVLIHAITKKGLGYAPAEADSVKWHGIGTYKIESGDTPKSAPTYTSVFADTMMKLADEDHSIVAVTPAMPAGSGLIPFGQKYPDRLFDVGIAEQHACTFAAGLATQGLKPVFAIYSTFLQRAYDQLIHDVARQKLHVIFAVDRAGLVGADGETHQGMYDVAFMRIIPNMVIMAPKDENELRHMMKTAVEYKGGPISYRYPRLPTRGVKMDEELQVLPIGKAEIVREGKHVAILSFGHVFEIAEAAVNQLQEEGIKPMLVNARFCKPLDEELLFRLAKEGYDIITVEEGSEMGGFGSAVIECYSRAGYHGMNVQIVAVPDYFVEHGSVKEQRQEVGLTADHIAARVRSLMPISKGVVEA.

Thiamine diphosphate-binding positions include H72 and 113–115; that span reads GHS. D144 is a binding site for Mg(2+). Residues 145 to 146, N173, Y284, and E363 each bind thiamine diphosphate; that span reads GA. N173 is a binding site for Mg(2+).

This sequence belongs to the transketolase family. DXPS subfamily. In terms of assembly, homodimer. It depends on Mg(2+) as a cofactor. Requires thiamine diphosphate as cofactor.

It carries out the reaction D-glyceraldehyde 3-phosphate + pyruvate + H(+) = 1-deoxy-D-xylulose 5-phosphate + CO2. It participates in metabolic intermediate biosynthesis; 1-deoxy-D-xylulose 5-phosphate biosynthesis; 1-deoxy-D-xylulose 5-phosphate from D-glyceraldehyde 3-phosphate and pyruvate: step 1/1. Functionally, catalyzes the acyloin condensation reaction between C atoms 2 and 3 of pyruvate and glyceraldehyde 3-phosphate to yield 1-deoxy-D-xylulose-5-phosphate (DXP). The chain is 1-deoxy-D-xylulose-5-phosphate synthase from Brevibacillus brevis (strain 47 / JCM 6285 / NBRC 100599).